The chain runs to 202 residues: Small ribosomal subunit protein uS4 (202 aa).

The tract at residues 22-43 (TRKNARRAYPPGQHGQNRRKRS) is disordered. Residues 90 to 152 (MRLDNTVFRL…DKSRKLVQAN (63 aa)) form the S4 RNA-binding domain.

It belongs to the universal ribosomal protein uS4 family. Part of the 30S ribosomal subunit. Contacts protein S5. The interaction surface between S4 and S5 is involved in control of translational fidelity.

One of the primary rRNA binding proteins, it binds directly to 16S rRNA where it nucleates assembly of the body of the 30S subunit. Functionally, with S5 and S12 plays an important role in translational accuracy. This chain is Small ribosomal subunit protein uS4, found in Gloeothece citriformis (strain PCC 7424) (Cyanothece sp. (strain PCC 7424)).